Consider the following 462-residue polypeptide: Annexin A7 (462 aa).

Residues 1-130 (MSYPPNQGYP…QGYPPQQGYP (130 aa)) form a disordered region. The segment at 7–131 (QGYPPQSNSP…GYPPQQGYPP (125 aa)) is 19 X 6 AA tandem repeats of Q-G-Y-P-P-Q. Over residues 16–130 (PQPGQYGAPQ…QGYPPQQGYP (115 aa)) the composition is skewed to low complexity. 4 Annexin repeats span residues 161–232 (HDCK…ALLT), 233–304 (EPAH…KLTE), 315–388 (MQVS…AIVT), and 392–462 (NPYG…DIIS).

The protein belongs to the annexin family.

In terms of biological role, calcium/phospholipid-binding protein which promotes membrane fusion and is involved in exocytosis. This chain is Annexin A7 (nxnA), found in Dictyostelium discoideum (Social amoeba).